We begin with the raw amino-acid sequence, 253 residues long: tRNA uridine(34) hydroxylase (253 aa).

The 95-residue stretch at 127 to 221 folds into the Rhodanese domain; it reads RGRPLVLLDT…YFEEVGGEGY (95 aa). The active-site Cysteine persulfide intermediate is the C181.

The protein belongs to the TrhO family.

It catalyses the reaction uridine(34) in tRNA + AH2 + O2 = 5-hydroxyuridine(34) in tRNA + A + H2O. Functionally, catalyzes oxygen-dependent 5-hydroxyuridine (ho5U) modification at position 34 in tRNAs. In Xanthomonas oryzae pv. oryzae (strain MAFF 311018), this protein is tRNA uridine(34) hydroxylase.